A 305-amino-acid polypeptide reads, in one-letter code: N-acetylmuramic acid 6-phosphate etherase (305 aa).

An SIS domain is found at 54–217 (AVPQLERGGR…SSALMVRLGK (164 aa)). The Proton donor role is filled by Glu-82. Glu-113 is an active-site residue.

Belongs to the GCKR-like family. MurNAc-6-P etherase subfamily. Homodimer.

The catalysed reaction is N-acetyl-D-muramate 6-phosphate + H2O = N-acetyl-D-glucosamine 6-phosphate + (R)-lactate. It participates in amino-sugar metabolism; N-acetylmuramate degradation. Its function is as follows. Specifically catalyzes the cleavage of the D-lactyl ether substituent of MurNAc 6-phosphate, producing GlcNAc 6-phosphate and D-lactate. This is N-acetylmuramic acid 6-phosphate etherase from Deinococcus radiodurans (strain ATCC 13939 / DSM 20539 / JCM 16871 / CCUG 27074 / LMG 4051 / NBRC 15346 / NCIMB 9279 / VKM B-1422 / R1).